Reading from the N-terminus, the 384-residue chain is Succinyl-diaminopimelate desuccinylase (384 aa).

A Zn(2+)-binding site is contributed by His-72. Asp-74 is an active-site residue. Residue Asp-105 participates in Zn(2+) binding. The active-site Proton acceptor is the Glu-139. Residues Glu-140, Glu-168, and His-355 each coordinate Zn(2+).

Belongs to the peptidase M20A family. DapE subfamily. Homodimer. Zn(2+) is required as a cofactor. Co(2+) serves as cofactor.

It carries out the reaction N-succinyl-(2S,6S)-2,6-diaminopimelate + H2O = (2S,6S)-2,6-diaminopimelate + succinate. Its pathway is amino-acid biosynthesis; L-lysine biosynthesis via DAP pathway; LL-2,6-diaminopimelate from (S)-tetrahydrodipicolinate (succinylase route): step 3/3. Its function is as follows. Catalyzes the hydrolysis of N-succinyl-L,L-diaminopimelic acid (SDAP), forming succinate and LL-2,6-diaminopimelate (DAP), an intermediate involved in the bacterial biosynthesis of lysine and meso-diaminopimelic acid, an essential component of bacterial cell walls. In Blochmanniella pennsylvanica (strain BPEN), this protein is Succinyl-diaminopimelate desuccinylase.